Reading from the N-terminus, the 292-residue chain is Geranyl diphosphate 2-C-methyltransferase (292 aa).

Belongs to the geranyl diphosphate 2-C-methyltransferase family. Requires Mg(2+) as cofactor.

The enzyme catalyses (2E)-geranyl diphosphate + S-adenosyl-L-methionine = (E)-2-methylgeranyl diphosphate + S-adenosyl-L-homocysteine + H(+). Its function is as follows. Catalyzes the SAM-dependent methylation of geranyl diphosphate (GPP) to yield (E)-2-methylgeranyl diphosphate (2-MeGPP). In Streptomyces coelicolor (strain ATCC BAA-471 / A3(2) / M145), this protein is Geranyl diphosphate 2-C-methyltransferase.